The chain runs to 263 residues: H-2 class II histocompatibility antigen, A-S beta chain (263 aa).

The N-terminal stretch at 1 to 27 (MALQIPSLLLSAAVVVLMVLSSPGTEG) is a signal peptide. The tract at residues 28–120 (GDSERHFVFQ…VETHTSLRRL (93 aa)) is beta-1. Residues 28–224 (GDSERHFVFQ…RAQSESARSK (197 aa)) are Extracellular-facing. Intrachain disulfides connect Cys42–Cys104 and Cys143–Cys199. An N-linked (GlcNAc...) asparagine glycan is attached at Asn46. The tract at residues 121-214 (EQPNVVISLS…SLKSPITVEW (94 aa)) is beta-2. Positions 123-211 (PNVVISLSRT…EHPSLKSPIT (89 aa)) constitute an Ig-like C1-type domain. Positions 215–224 (RAQSESARSK) are connecting peptide. The chain crosses the membrane as a helical span at residues 225–245 (MLSGIGGCVLGVIFLGLGLFI). Residues 246–263 (RHRSQKGPRGPPPAGLLQ) lie on the Cytoplasmic side of the membrane.

Belongs to the MHC class II family. In terms of processing, ubiquitinated in immature dendritic cells leading to down-regulation of MHC class II.

The protein localises to the membrane. This is H-2 class II histocompatibility antigen, A-S beta chain (H2-Ab1) from Mus musculus (Mouse).